The following is an 855-amino-acid chain: Coiled-coil domain-containing protein 87 (855 aa).

Disordered stretches follow at residues 23–43 (LFPS…QDAT) and 278–302 (SRPS…PTSP). Positions 287–296 (PSHSPSSESH) are enriched in low complexity. Coiled-coil stretches lie at residues 387 to 413 (TRRL…EASG) and 764 to 789 (RSYL…ESVF).

It belongs to the CCDC87 family. In terms of tissue distribution, specifically expressed in testis (at protein level). Not detected in other tissues tested (at protein level). In the testis, localizes to pachytene spermatocytes and spermatids.

In terms of biological role, plays a role in spermatogenesis, where it is important for normal sperm head morphology. Also required for the acrosome reaction and thus normal male fertility. The sequence is that of Coiled-coil domain-containing protein 87 (Ccdc87) from Mus musculus (Mouse).